A 503-amino-acid chain; its full sequence is MSEQNHPQTEPQLDENQIIALRREKLNNIRQQRNAYPNDFKRDSFAADLQAQYGEIGKEELDPQAVPVKIAGRMMLKRQMGKASFATIQDVTGQIQLYLNNKGVSQEVLDGFNHWDLGDIVGAEGTLFKTNHGELTVRVSDIRLLSKSLRPLPDKHKGLSDQETKYRQRYVDLIANEESRNTFIKRSQIIQSVRNFMVGEHYLEVETPMMHPIPGGATAKPFVTHHNALDIPLYLRIAPELYLKRLVVGGLERVFEINRSFRNEGMSVRHNPEFTMIEFYEAFSDYERMMQMAEDIIRNASRTVNGTANITYNGKEVDLESPFERLTILEAIKKYNPHYTDEQLNDAEWLKKEIVKHGESLPPSPGIGSLQLALFEGCAEGKLWNPTFIVDYPVEVSPLARASDTKQGLTERFELFVVGRELANGYSELNDPEDQAERFKSQVAQKDAGDDEAMHYDADYIRAMEFGLPPTGGCGIGIDRLVMLLTDLQTIRDVILFPQMRPE.

Mg(2+)-binding residues include Glu414 and Glu421.

The protein belongs to the class-II aminoacyl-tRNA synthetase family. In terms of assembly, homodimer. It depends on Mg(2+) as a cofactor.

The protein resides in the cytoplasm. The catalysed reaction is tRNA(Lys) + L-lysine + ATP = L-lysyl-tRNA(Lys) + AMP + diphosphate. The polypeptide is Lysine--tRNA ligase (Neisseria gonorrhoeae (strain NCCP11945)).